The chain runs to 262 residues: Acetylglutamate kinase (262 aa).

Substrate contacts are provided by residues 48–49 (GG), arginine 70, and asparagine 162.

The protein belongs to the acetylglutamate kinase family. ArgB subfamily.

It is found in the cytoplasm. It carries out the reaction N-acetyl-L-glutamate + ATP = N-acetyl-L-glutamyl 5-phosphate + ADP. It participates in amino-acid biosynthesis; L-arginine biosynthesis; N(2)-acetyl-L-ornithine from L-glutamate: step 2/4. Functionally, catalyzes the ATP-dependent phosphorylation of N-acetyl-L-glutamate. The polypeptide is Acetylglutamate kinase (Vibrio cholerae serotype O1 (strain ATCC 39541 / Classical Ogawa 395 / O395)).